The primary structure comprises 4644 residues: Cytoplasmic dynein 1 heavy chain 1 (4644 aa).

S2 carries the post-translational modification N-acetylserine. The tract at residues 2 to 1865 (SETGGGEDGS…SIQMANAKFN (1864 aa)) is stem. Coiled coils occupy residues 48–69 (AALE…FLSD), 179–200 (SVEK…NIEI), 453–476 (AHRK…QLRA), and 541–564 (TEAW…RITA). At S68 the chain carries Phosphoserine. The interval 446–701 (MVWRINPAHR…NTQEIFDDWA (256 aa)) is interaction with DYNC1I2. The interaction with DYNC1LI2 stretch occupies residues 649–800 (AKQIDRQLTA…EKVEERNTIS (152 aa)). K1123 is modified (N6-acetyllysine). Residues 1169–1201 (TYVQSLKRKIKQFEKQVELYRNGQRLLEKQRFQ) are a coiled coil. The residue at position 1228 (S1228) is a Phosphoserine. Coiled coils occupy residues 1229–1250 (AIQQ…AVES) and 1355–1371 (RKLR…LKNF). AAA regions lie at residues 1866-2097 (YGFE…VLVS), 2178-2450 (EELK…LTRL), 2554-2803 (EVET…WVRG), and 2897-3166 (VFYE…GGRT). ATP contacts are provided by residues 1904–1911 (GPAGTGKT) and 2222–2229 (GPSGSGKS). The disordered stretch occupies residues 2389-2409 (EDEAQRRRKGKEDEGEEAASP). ATP-binding positions include 2593–2600 (GPPGSGKT) and 2935–2942 (GVSGAGKT). Coiled coils occupy residues 3187–3273 (EKRS…ADKQ), 3394–3498 (AIAQ…KNQM), and 3735–3798 (EFQL…VSQQ). Positions 3187–3498 (EKRSELEEQQ…KTSETFKNQM (312 aa)) are stalk. An N6-acetyllysine modification is found at K3478. 2 AAA regions span residues 3551 to 3780 (LSNA…EVTR) and 4003 to 4219 (AHMF…TVDT). S4160 carries the phosphoserine modification. Position 4281 is an N6-acetyllysine (K4281). Residue T4364 is modified to Phosphothreonine.

The protein belongs to the dynein heavy chain family. In terms of assembly, homodimer. The cytoplasmic dynein 1 complex consists of two catalytic heavy chains (HCs) and a number of non-catalytic subunits presented by intermediate chains (ICs), light intermediate chains (LICs) and light chains (LCs); the composition seems to vary in respect to the IC, LIC and LC composition. The heavy chain homodimer serves as a scaffold for the probable homodimeric assembly of the respective non-catalytic subunits. The ICs and LICs bind directly to the HC dimer and dynein LCs assemble on the IC dimer. Interacts with DYNC1LI1; DYNC1LI1 and DYNC1LI2 bind mutually exclusive to DYNC1H1. Interacts with DYNC1LI2; DYNC1LI1 and DYNC1LI2 bind mutually exclusive to DYNC1H1. Interacts with DYNC1I2. Interacts with BICD2. Interacts with DNALI1.

The protein resides in the cytoplasm. Its subcellular location is the cytoskeleton. Cytoplasmic dynein 1 acts as a motor for the intracellular retrograde motility of vesicles and organelles along microtubules. Dynein has ATPase activity; the force-producing power stroke is thought to occur on release of ADP. Plays a role in mitotic spindle assembly and metaphase plate congression. The sequence is that of Cytoplasmic dynein 1 heavy chain 1 (Dync1h1) from Rattus norvegicus (Rat).